The sequence spans 152 residues: SKP1-like protein 10 (152 aa).

The interaction with the F-box domain of F-box proteins stretch occupies residues 94–152; it reads IMAANYLNIKSLLDLACQTVADMIKDNTVEHTRKFFNIENDYTHEEEEAVRRENQWGFE.

It belongs to the SKP1 family. Part of a SCF (SKP1-cullin-F-box) protein ligase complex. Interacts with CPR1/CPR30. As to expression, expressed in young seedlings, roots, leaves, floral stems, inflorescences, and siliques.

The protein resides in the nucleus. It participates in protein modification; protein ubiquitination. Involved in ubiquitination and subsequent proteasomal degradation of target proteins. Together with CUL1, RBX1 and a F-box protein, it forms a SCF E3 ubiquitin ligase complex. The functional specificity of this complex depends on the type of F-box protein. In the SCF complex, it serves as an adapter that links the F-box protein to CUL1. This is SKP1-like protein 10 (ASK10) from Arabidopsis thaliana (Mouse-ear cress).